The primary structure comprises 390 residues: ATP phosphoribosyltransferase regulatory subunit (390 aa).

Belongs to the class-II aminoacyl-tRNA synthetase family. HisZ subfamily. In terms of assembly, heteromultimer composed of HisG and HisZ subunits.

Its subcellular location is the cytoplasm. It participates in amino-acid biosynthesis; L-histidine biosynthesis; L-histidine from 5-phospho-alpha-D-ribose 1-diphosphate: step 1/9. Required for the first step of histidine biosynthesis. May allow the feedback regulation of ATP phosphoribosyltransferase activity by histidine. The sequence is that of ATP phosphoribosyltransferase regulatory subunit from Nitrosomonas eutropha (strain DSM 101675 / C91 / Nm57).